The following is a 507-amino-acid chain: Anaerobic nitric oxide reductase transcription regulator NorR (507 aa).

Position 57 is a 4-aspartylphosphate (D57). The Sigma-54 factor interaction domain maps to 188 to 417 (IIGLSSVMQQ…LEHSIYRAAI (230 aa)). Residues 216-223 (GETGVGKE) and 279-288 (ADNGTLFLDE) each bind ATP. The segment at residues 483-502 (WAATARKLELDSGNLHRLAK) is a DNA-binding region (H-T-H motif).

Its pathway is nitrogen metabolism; nitric oxide reduction. Its function is as follows. Required for the expression of anaerobic nitric oxide (NO) reductase, acts as a transcriptional activator for at least the norVW operon. Activation also requires sigma-54. The protein is Anaerobic nitric oxide reductase transcription regulator NorR of Serratia proteamaculans (strain 568).